We begin with the raw amino-acid sequence, 603 residues long: uncharacterized protein (603 aa).

Positions 1 to 93 (MSFVIAAPET…AGAYASAEAA (93 aa)) constitute a PE domain.

This sequence belongs to the mycobacterial PE family. PGRS subfamily.

This is an uncharacterized protein from Mycobacterium tuberculosis (strain ATCC 25618 / H37Rv).